The primary structure comprises 315 residues: Secreted mono- and diacylglycerol lipase LIP2 (315 aa).

The signal sequence occupies residues 1–21 (MACFRVILYLSVIFFVQCVFA). A disulfide bond links Cys68 and Cys308. N-linked (GlcNAc...) asparagine glycosylation occurs at Asn74. The active-site Nucleophile is the Ser182. Asp240 is a catalytic residue. N-linked (GlcNAc...) asparagine glycosylation occurs at Asn265. Residue His292 is part of the active site.

Belongs to the AB hydrolase superfamily. Lipase family. Class 3 subfamily.

Its subcellular location is the secreted. It carries out the reaction a monoacylglycerol + H2O = glycerol + a fatty acid + H(+). The enzyme catalyses a diacylglycerol + H2O = a monoacylglycerol + a fatty acid + H(+). Secreted lipase involved in Dandruff and seborrheic dermatitis (D/SD) probably via lipase-mediated breakdown of sebaceous lipids and release of irritating free fatty acids. Shows activity against monoglyceride and diglyceride substrates and generates free oleic acid from the substrates mono- and diolein. Able to cleave the oleic acid from both the 1 and the 2 position of the glycerol backbone as 1,2 isomers of diolein were converted into oleic acid and glycerol. Due to an absence of fatty acid synthase genes in Malassezia species, secretory lipases are essential for the yeast to generate free fatty acids from degradation of sebum and assimilate them as lipid sources for growth. Plays an essential role at the pathogen-host interface during disease progression. Also performs the reverse reaction to build diacylglycerols from monoacylglycerols. The sequence is that of Secreted mono- and diacylglycerol lipase LIP2 from Malassezia restricta (strain ATCC 96810 / NBRC 103918 / CBS 7877) (Seborrheic dermatitis infection agent).